The following is an 803-amino-acid chain: Volume-regulated anion channel subunit LRRC8C (803 aa).

The Cytoplasmic portion of the chain corresponds to 1-22 (MIPVTEFRQFSEQQPAFRVLKP). The helical transmembrane segment at 23–47 (WWDVFTDYLSVAMLMIGVFGCTLQV) threads the bilayer. The Extracellular portion of the chain corresponds to 48-124 (MQDKIICLPK…CYERALHWYA (77 aa)). 2 disulfides stabilise this stretch: Cys54/Cys308 and Cys115/Cys293. Residues Asn64 and Asn70 are each glycosylated (N-linked (GlcNAc...) asparagine). The chain crosses the membrane as a helical span at residues 125–144 (KYFPYLVLIHTLVFMLCSNF). Topologically, residues 145–262 (WFKFPGSSSK…EEGDILYAMY (118 aa)) are cytoplasmic. Residues 177-209 (EVSGEDSEEKDNRKNNMNRSNTIQSGPEDSLVN) are disordered. The segment covering 191 to 209 (NNMNRSNTIQSGPEDSLVN) has biased composition (polar residues). 2 positions are modified to phosphoserine: Ser212 and Ser215. Residues 263–284 (VRQTVLKVIKFLIIIAYNSALV) form a helical membrane-spanning segment. Residues 285–314 (SKVQFTVDCNVDIQDMTGYKNFSCNHTMAH) are Extracellular-facing. The chain crosses the membrane as a helical span at residues 315 to 339 (LFSKLSFCYLCFVSIYGLTCLYTLY). Topologically, residues 340 to 803 (WLFYRSLREY…SDVREQMKTE (464 aa)) are cytoplasmic. LRR repeat units follow at residues 397 to 420 (ENKL…KLQT), 421 to 443 (NAHN…VFEI), 446 to 466 (LQSL…IAQL), 467 to 488 (DNLQ…ALSF), 490 to 513 (KENL…MYGL), 515 to 537 (NLEE…TLES), 541 to 563 (LKSL…VVDV), 565 to 587 (SHLQ…NLKK), 588 to 611 (MTNL…VFSL), 613 to 635 (SLQE…SFQH), 636 to 659 (LRKL…IKKL), 660 to 682 (TSLE…LFLC), 684 to 705 (KIRY…IGVL), 706 to 728 (QSLQ…LYFC), 730 to 751 (KLKT…IGNL), 753 to 774 (FLSY…LGDC), and 776 to 799 (ALKR…VREQ).

The protein belongs to the LRRC8 family. As to quaternary structure, heterohexamer; oligomerizes with other LRRC8 proteins (LRRC8A, LRRC8B, LRRC8D and/or LRRC8E) to form a heterohexamer. Homoheptamer; inactive, likely because it is not targeted to the plasma membrane in the absence of LRRC8A. In vivo, the subunit composition may depend primarily on expression levels, and heterooligomeric channels containing various proportions of the different LRRC8 proteins may coexist. Expressed at highest levels in skeletal muscle, and at moderate levels in heart, lung and peripheral blood leukocytes.

Its subcellular location is the cell membrane. The protein localises to the endoplasmic reticulum membrane. It carries out the reaction chloride(in) = chloride(out). The enzyme catalyses iodide(out) = iodide(in). It catalyses the reaction taurine(out) = taurine(in). The catalysed reaction is 2',3'-cGAMP(out) = 2',3'-cGAMP(in). In terms of biological role, non-essential component of the volume-regulated anion channel (VRAC, also named VSOAC channel), an anion channel required to maintain a constant cell volume in response to extracellular or intracellular osmotic changes. The VRAC channel conducts iodide better than chloride and can also conduct organic osmolytes like taurine. Plays a redundant role in the efflux of amino acids, such as aspartate and glutamate, in response to osmotic stress. The VRAC channel also mediates transport of immunoreactive cyclic dinucleotide GMP-AMP (2'-3'-cGAMP), an immune messenger produced in response to DNA virus in the cytosol. Channel activity requires LRRC8A plus at least one other family member (LRRC8B, LRRC8C, LRRC8D or LRRC8E); channel characteristics depend on the precise subunit composition. This is Volume-regulated anion channel subunit LRRC8C from Homo sapiens (Human).